A 147-amino-acid chain; its full sequence is Transthyretin (147 aa).

The signal sequence occupies residues 1-20 (MASFRLFLLCLAGLVFVSEA). The residue at position 30 (Cys30) is a Sulfocysteine. Residue Lys35 participates in L-thyroxine binding. Residue Glu62 is modified to 4-carboxyglutamate. Phosphoserine is present on Ser72. Glu74 is an L-thyroxine binding site. A glycan (N-linked (GlcNAc...) asparagine) is linked at Asn118. Ser137 provides a ligand contact to L-thyroxine.

The protein belongs to the transthyretin family. As to quaternary structure, homotetramer. Dimer of dimers. In the homotetramer, subunits assemble around a central channel that can accommodate two ligand molecules. Interacts with RBP4. Sulfonation of the reactive cysteine Cys-30 enhances the stability of the native conformation of TTR, avoiding misassembly of the protein leading to amyloid formation. As to expression, detected in serum (at protein level).

It localises to the secreted. Its function is as follows. Thyroid hormone-binding protein. Probably transports thyroxine from the bloodstream to the brain. This chain is Transthyretin (TTR), found in Bos taurus (Bovine).